The following is a 397-amino-acid chain: Probable sugar efflux transporter (397 aa).

The next 12 membrane-spanning stretches (helical) occupy residues 15-35 (VVTL…PVGL), 51-71 (GIML…FMLL), 81-101 (LICL…AWSF), 103-123 (VLVI…SITA), 136-156 (AQAL…GLPV), 170-190 (FLAI…LLPL), 209-229 (PALM…YTAY), 246-266 (FATV…VIFG), 273-293 (ASVL…LLMP), 301-321 (LAIL…GMQV), 333-353 (VAMS…ALVG), and 364-384 (DIGY…VIIF).

Belongs to the major facilitator superfamily. SotB (TC 2.A.1.2) family.

It localises to the cell inner membrane. Its function is as follows. Involved in the efflux of sugars. The physiological role may be the reduction of the intracellular concentration of toxic sugars or sugar metabolites. This Escherichia fergusonii (strain ATCC 35469 / DSM 13698 / CCUG 18766 / IAM 14443 / JCM 21226 / LMG 7866 / NBRC 102419 / NCTC 12128 / CDC 0568-73) protein is Probable sugar efflux transporter.